The sequence spans 418 residues: MIFDKGNVEDFDKELWDAIHAEEERQEHHIELIASENMVSKAVMAAQGSVLTNKYAEGYPGNRYYGGTECVDIVETLAIERAKKLFGAAFANVQAHSGSQANAAAYMALIEAGDTVLGMDLAAGGHLTHGSPVNFSGKTYHFVGYSVDADTEMLNYEAILEQAKAVQPKLIVAGASAYSRSIDFEKFRAIADHVGAYLMVDMAHIAGLVAAGVHPSPVPYAHIVTSTTHKTLRGPRGGLILTNDEALAKKINSAVFPGLQGGPLEHVIAAKAVAFKEALDPAFKDYAQAIIDNTAAMAAVFAQDDRFRLISGGTDNHVFLVDVTKVIANGKLAQNLLDEVNITLNKNAIPFETLSPFKTSGIRIGCAAITSRGMGVKESQTIARLIIKALVNHNQETILEEVRQEVRQLTDAFPLYKK.

(6S)-5,6,7,8-tetrahydrofolate contacts are provided by residues Leu121 and Gly125 to Leu127. N6-(pyridoxal phosphate)lysine is present on Lys230. Residue Ser355 to Phe357 participates in (6S)-5,6,7,8-tetrahydrofolate binding.

The protein belongs to the SHMT family. As to quaternary structure, homodimer. Requires pyridoxal 5'-phosphate as cofactor.

It is found in the cytoplasm. The enzyme catalyses (6R)-5,10-methylene-5,6,7,8-tetrahydrofolate + glycine + H2O = (6S)-5,6,7,8-tetrahydrofolate + L-serine. It participates in one-carbon metabolism; tetrahydrofolate interconversion. It functions in the pathway amino-acid biosynthesis; glycine biosynthesis; glycine from L-serine: step 1/1. Catalyzes the reversible interconversion of serine and glycine with tetrahydrofolate (THF) serving as the one-carbon carrier. This reaction serves as the major source of one-carbon groups required for the biosynthesis of purines, thymidylate, methionine, and other important biomolecules. Also exhibits THF-independent aldolase activity toward beta-hydroxyamino acids, producing glycine and aldehydes, via a retro-aldol mechanism. The sequence is that of Serine hydroxymethyltransferase from Streptococcus pyogenes serotype M18 (strain MGAS8232).